Consider the following 184-residue polypeptide: Gremlin-1 (184 aa).

Residues 1–24 (MNRTAYTVGALLLLLGTLLPTAEG) form the signal peptide. The tract at residues 23 to 77 (EGKKKGSQGAIPPPDKAQHNDSEQTQSPPQPGSRTRGRGQGRGTAMPGEEVLESS) is disordered. N-linked (GlcNAc...) asparagine glycosylation is present at Asn42. Disulfide bonds link Cys94/Cys144, Cys108/Cys158, Cys118/Cys176, and Cys122/Cys178. One can recognise a CTCK domain in the interval 94–184 (CKTQPLKQTI…QCRCISIDLD (91 aa)).

Belongs to the DAN family. Homodimer; can also form homooligomers. Interacts with BMP2; can form higher oligomers with BMP2. Interacts with SLIT1 and SLIT2 in a glycosylation-dependent manner. In terms of tissue distribution, highly expressed in spleen and to a lesser extent in lung, skeletal muscle and kidney. Expressed only in non-transformed cells or primary fibroblasts in culture but not in established transformed or tumor derived cell lines. Broadly expressed in limb bud mesenchyme but restricted to the distal limb bud mesenchyme and concentrated posteriorly. Expressed in ovary especially in granulosa cells of follicles of type 4.

It localises to the secreted. Its function is as follows. Cytokine that may play an important role during carcinogenesis and metanephric kidney organogenesis, as BMP a antagonist required for early limb outgrowth and patterning in maintaining the FGF4-SHH feedback loop. Down-regulates the BMP4 signaling in a dose-dependent manner. Antagonist of BMP2; inhibits BMP2-mediated differentiation of osteoblasts (in vitro). Acts as inhibitor of monocyte chemotaxis. The chain is Gremlin-1 (Grem1) from Mus musculus (Mouse).